Consider the following 223-residue polypeptide: Adenylate kinase (223 aa).

17 to 22 is an ATP binding site; that stretch reads GAGKGT. Residues 37–66 form an NMP region; sequence STGDMLRSQVAKGTPLGVEAKKIMDQGGLV. AMP is bound by residues Thr38, Arg43, 64–66, 93–96, and Gln100; these read GLV and GFPR. The LID stretch occupies residues 134–171; sequence GRLVHPSSGRSYHKLFNPPKVEMTDDVTGEPLVQRSDD. ATP contacts are provided by residues Arg135 and 144–145; that span reads SY. Residues Arg168 and Arg179 each coordinate AMP. Gln207 is an ATP binding site.

The protein belongs to the adenylate kinase family. AK2 subfamily. Monomer.

The protein localises to the cytoplasm. It localises to the cytosol. The protein resides in the mitochondrion intermembrane space. It carries out the reaction AMP + ATP = 2 ADP. Catalyzes the reversible transfer of the terminal phosphate group between ATP and AMP. Plays an important role in cellular energy homeostasis and in adenine nucleotide metabolism. Adenylate kinase activity is critical for regulation of the phosphate utilization and the AMP de novo biosynthesis pathways. This chain is Adenylate kinase, found in Vanderwaltozyma polyspora (strain ATCC 22028 / DSM 70294 / BCRC 21397 / CBS 2163 / NBRC 10782 / NRRL Y-8283 / UCD 57-17) (Kluyveromyces polysporus).